Here is a 399-residue protein sequence, read N- to C-terminus: Elongation factor Tu (399 aa).

Residues 10–204 (KPHVNIGTIG…AVDASIPEPE (195 aa)) form the tr-type G domain. The G1 stretch occupies residues 19 to 26 (GHVDHGKT). Position 19–26 (19–26 (GHVDHGKT)) interacts with GTP. T26 contributes to the Mg(2+) binding site. The G2 stretch occupies residues 60–64 (GITIN). The interval 81–84 (DCPG) is G3. GTP is bound by residues 81–85 (DCPGH) and 136–139 (NKCD). Residues 136-139 (NKCD) are G4. The segment at 174–176 (SGL) is G5.

This sequence belongs to the TRAFAC class translation factor GTPase superfamily. Classic translation factor GTPase family. EF-Tu/EF-1A subfamily. Monomer.

The protein resides in the cytoplasm. The catalysed reaction is GTP + H2O = GDP + phosphate + H(+). GTP hydrolase that promotes the GTP-dependent binding of aminoacyl-tRNA to the A-site of ribosomes during protein biosynthesis. The protein is Elongation factor Tu of Prochlorococcus marinus (strain MIT 9215).